The chain runs to 369 residues: Lipoyl synthase, mitochondrial (369 aa).

The transit peptide at 1–32 directs the protein to the mitochondrion; the sequence is MLTKGVRALAWSPRRYITLDAEAAKPVVAKRR. Residues Cys106, Cys111, Cys117, Cys136, Cys140, Cys143, and Ser351 each contribute to the [4Fe-4S] cluster site. Residues 121–340 form the Radical SAM core domain; the sequence is NKGSATATIM…KEKALELGFL (220 aa).

This sequence belongs to the radical SAM superfamily. Lipoyl synthase family. [4Fe-4S] cluster serves as cofactor.

It is found in the mitochondrion. It carries out the reaction [[Fe-S] cluster scaffold protein carrying a second [4Fe-4S](2+) cluster] + N(6)-octanoyl-L-lysyl-[protein] + 2 oxidized [2Fe-2S]-[ferredoxin] + 2 S-adenosyl-L-methionine + 4 H(+) = [[Fe-S] cluster scaffold protein] + N(6)-[(R)-dihydrolipoyl]-L-lysyl-[protein] + 4 Fe(3+) + 2 hydrogen sulfide + 2 5'-deoxyadenosine + 2 L-methionine + 2 reduced [2Fe-2S]-[ferredoxin]. The protein operates within protein modification; protein lipoylation via endogenous pathway; protein N(6)-(lipoyl)lysine from octanoyl-[acyl-carrier-protein]: step 2/2. Its function is as follows. Catalyzes the radical-mediated insertion of two sulfur atoms into the C-6 and C-8 positions of the octanoyl moiety bound to the lipoyl domains of lipoate-dependent enzymes, thereby converting the octanoylated domains into lipoylated derivatives. This is Lipoyl synthase, mitochondrial from Eremothecium gossypii (strain ATCC 10895 / CBS 109.51 / FGSC 9923 / NRRL Y-1056) (Yeast).